Here is a 443-residue protein sequence, read N- to C-terminus: Thymidine phosphorylase (443 aa).

It belongs to the thymidine/pyrimidine-nucleoside phosphorylase family. Homodimer.

The enzyme catalyses thymidine + phosphate = 2-deoxy-alpha-D-ribose 1-phosphate + thymine. It functions in the pathway pyrimidine metabolism; dTMP biosynthesis via salvage pathway; dTMP from thymine: step 1/2. In terms of biological role, the enzymes which catalyze the reversible phosphorolysis of pyrimidine nucleosides are involved in the degradation of these compounds and in their utilization as carbon and energy sources, or in the rescue of pyrimidine bases for nucleotide synthesis. This is Thymidine phosphorylase from Shewanella baltica (strain OS195).